The chain runs to 505 residues: Aminoaldehyde dehydrogenase 2 (505 aa).

The Na(+) site is built by Ile31 and Asp99. NAD(+) contacts are provided by residues 159-161 (TPW) and 185-188 (KPSE). Leu189 lines the Na(+) pocket. 238–242 (GSGPT) provides a ligand contact to NAD(+). Catalysis depends on Glu260, which acts as the Proton acceptor. Residue Leu261 participates in NAD(+) binding. The active-site Nucleophile is the Cys295. NAD(+) is bound by residues Glu394 and Trp460.

Belongs to the aldehyde dehydrogenase family. In terms of assembly, forms homodimers.

The enzyme catalyses 4-aminobutanal + NAD(+) + H2O = 4-aminobutanoate + NADH + 2 H(+). It catalyses the reaction 3-aminopropanal + NAD(+) + H2O = beta-alanine + NADH + 2 H(+). It carries out the reaction 4-(trimethylamino)butanal + NAD(+) + H2O = 4-(trimethylamino)butanoate + NADH + 2 H(+). The catalysed reaction is 4-guanidinobutanal + NAD(+) + H2O = 4-guanidinobutanoate + NADH + 2 H(+). It participates in amine and polyamine biosynthesis; betaine biosynthesis via choline pathway; betaine from betaine aldehyde: step 1/1. Functionally, dehydrogenase that catalyzes the oxidation of several aminoaldehydes. Metabolizes and detoxifies aldehyde products of polyamine degradation to non-toxic amino acids. Catalyzes the oxidation of 4-aminobutanal and 3-aminopropanal to 4-aminobutanoate and beta-alanine, respectively. Catalyzes the oxidation of 4-(trimethylamino)butanal and 4-guanidinobutanal to 4-trimethylammoniobutanoate and 4-guanidinobutanoate, respectively. In Solanum lycopersicum (Tomato), this protein is Aminoaldehyde dehydrogenase 2.